The chain runs to 261 residues: Shikimate dehydrogenase (NADP(+)) (261 aa).

Residues 13–15 (SLS) and T60 contribute to the shikimate site. K64 serves as the catalytic Proton acceptor. NADP(+) is bound at residue E76. Shikimate is bound by residues N85 and D100. Residues 122-126 (GAGGA), 143-148 (NRTVER), and I203 each bind NADP(+). Y205 lines the shikimate pocket. Residue G226 participates in NADP(+) binding.

It belongs to the shikimate dehydrogenase family. As to quaternary structure, homodimer.

It catalyses the reaction shikimate + NADP(+) = 3-dehydroshikimate + NADPH + H(+). It functions in the pathway metabolic intermediate biosynthesis; chorismate biosynthesis; chorismate from D-erythrose 4-phosphate and phosphoenolpyruvate: step 4/7. Its function is as follows. Involved in the biosynthesis of the chorismate, which leads to the biosynthesis of aromatic amino acids. Catalyzes the reversible NADPH linked reduction of 3-dehydroshikimate (DHSA) to yield shikimate (SA). This Exiguobacterium sp. (strain ATCC BAA-1283 / AT1b) protein is Shikimate dehydrogenase (NADP(+)).